Consider the following 90-residue polypeptide: Small ribosomal subunit protein uS15c (90 aa).

The segment covering 1-11 (MVKNSFSSVIS) has biased composition (polar residues). Positions 1-20 (MVKNSFSSVISQEEKKENGG) are disordered.

Belongs to the universal ribosomal protein uS15 family. As to quaternary structure, part of the 30S ribosomal subunit.

It localises to the plastid. It is found in the chloroplast. The chain is Small ribosomal subunit protein uS15c (rps15) from Cucumis sativus (Cucumber).